A 349-amino-acid polypeptide reads, in one-letter code: Adenosine deaminase (349 aa).

The Zn(2+) site is built by His25 and His27. Substrate is bound by residues His27, Asp29, and Gly182. A Zn(2+)-binding site is contributed by His209. Catalysis depends on Glu212, which acts as the Proton donor. Asp289 is a binding site for Zn(2+).

This sequence belongs to the metallo-dependent hydrolases superfamily. Adenosine and AMP deaminases family. Adenosine deaminase subfamily. It depends on Zn(2+) as a cofactor.

The enzyme catalyses adenosine + H2O + H(+) = inosine + NH4(+). It catalyses the reaction 2'-deoxyadenosine + H2O + H(+) = 2'-deoxyinosine + NH4(+). Catalyzes the hydrolytic deamination of adenosine and 2-deoxyadenosine. This Streptococcus mutans serotype c (strain ATCC 700610 / UA159) protein is Adenosine deaminase.